We begin with the raw amino-acid sequence, 73 residues long: Putative antitoxin VapB9 (73 aa).

Its function is as follows. Antitoxin component of a possible type II toxin-antitoxin (TA) system. The cognate toxin is VapC9. In Mycobacterium tuberculosis (strain CDC 1551 / Oshkosh), this protein is Putative antitoxin VapB9 (vapB9).